A 197-amino-acid chain; its full sequence is MQVHDVELTISAVEENQYPATALPELALVGRSNVGKSSLTNVLINRKNYAHTSGQPGKTQTLNFYEVEHKLYFVDVPGYGYAKVSKKQREKFGKMIENYLTTREQLRGVVQLVDGRHAPTEDDRMMFQWLAYYHIPTLVVATKVDKVKPNAHNRIVKVVKEGLGAAKDQDLILFSATTKKGAESVWQWIEERTGVSD.

One can recognise an EngB-type G domain in the interval 22–195 (ALPELALVGR…WQWIEERTGV (174 aa)). GTP is bound by residues 30-37 (GRSNVGKS), 57-61 (GKTQT), 75-78 (DVPG), 142-145 (TKVD), and 174-176 (FSA). Mg(2+) is bound by residues Ser37 and Thr59.

Belongs to the TRAFAC class TrmE-Era-EngA-EngB-Septin-like GTPase superfamily. EngB GTPase family. Requires Mg(2+) as cofactor.

Necessary for normal cell division and for the maintenance of normal septation. The chain is Probable GTP-binding protein EngB from Limosilactobacillus fermentum (strain NBRC 3956 / LMG 18251) (Lactobacillus fermentum).